Here is a 120-residue protein sequence, read N- to C-terminus: Large ribosomal subunit protein uL18 (120 aa).

This sequence belongs to the universal ribosomal protein uL18 family. In terms of assembly, part of the 50S ribosomal subunit; part of the 5S rRNA/L5/L18/L25 subcomplex. Contacts the 5S and 23S rRNAs.

Functionally, this is one of the proteins that bind and probably mediate the attachment of the 5S RNA into the large ribosomal subunit, where it forms part of the central protuberance. In Bacillus pumilus (strain SAFR-032), this protein is Large ribosomal subunit protein uL18.